The primary structure comprises 299 residues: Protoheme IX farnesyltransferase (299 aa).

Helical transmembrane passes span 29 to 49, 51 to 71, 100 to 120, 123 to 143, 150 to 170, 177 to 197, 223 to 243, 244 to 264, and 275 to 295; these read VVTL…PGAV, LQPL…AAAM, HAAT…YWLV, LTAW…TAYL, NIVI…TAVT, GLLL…ALAI, CIFL…LVGM, SGAL…YKAW, and AMDV…LLLV.

Belongs to the UbiA prenyltransferase family. Protoheme IX farnesyltransferase subfamily.

Its subcellular location is the cell inner membrane. It carries out the reaction heme b + (2E,6E)-farnesyl diphosphate + H2O = Fe(II)-heme o + diphosphate. The protein operates within porphyrin-containing compound metabolism; heme O biosynthesis; heme O from protoheme: step 1/1. Its function is as follows. Converts heme B (protoheme IX) to heme O by substitution of the vinyl group on carbon 2 of heme B porphyrin ring with a hydroxyethyl farnesyl side group. The polypeptide is Protoheme IX farnesyltransferase (Shewanella amazonensis (strain ATCC BAA-1098 / SB2B)).